Here is a 491-residue protein sequence, read N- to C-terminus: Interferon regulatory factor 3 (491 aa).

Positions 12 to 116 form a DNA-binding region, IRF tryptophan pentad repeat; that stretch reads KLRFGPWLLN…DPHKVYAVAS (105 aa).

It belongs to the IRF family. Widely expressed with higher expression in lung, spleen and intestine.

It is found in the cytoplasm. It localises to the nucleus. Functionally, key transcriptional regulator of type I interferon (IFN)-dependent immune responses which plays a critical role in the innate immune response against DNA and RNA viruses. Regulates the transcription of type I IFN genes (IFN-alpha and IFN-beta) and IFN-stimulated genes (ISG) by binding to an interferon-stimulated response element (ISRE) in their promoters. May activate transcription by complex formation with other transcriptional factors, possibly members of the STAT family. Binds specifically to the IFN-stimulated response element (ISRE) but not to the IRF-1 binding site PRD-I. The chain is Interferon regulatory factor 3 (IRF3) from Gallus gallus (Chicken).